The sequence spans 206 residues: Dephospho-CoA kinase (206 aa).

The DPCK domain occupies 4–200; it reads IVALTGGIGS…AHYLQLASQF (197 aa). 12–17 lines the ATP pocket; it reads GSGKST.

This sequence belongs to the CoaE family.

It localises to the cytoplasm. It catalyses the reaction 3'-dephospho-CoA + ATP = ADP + CoA + H(+). The protein operates within cofactor biosynthesis; coenzyme A biosynthesis; CoA from (R)-pantothenate: step 5/5. In terms of biological role, catalyzes the phosphorylation of the 3'-hydroxyl group of dephosphocoenzyme A to form coenzyme A. The sequence is that of Dephospho-CoA kinase from Shigella boydii serotype 4 (strain Sb227).